The sequence spans 26 residues: Delta-hemolysin (26 aa).

Met1 carries the post-translational modification N-formylmethionine.

The protein belongs to the delta-lysin family.

It localises to the secreted. Its subcellular location is the host cell membrane. Lyses erythrocytes and many other mammalian cells. This Staphylococcus aureus (strain Mu50 / ATCC 700699) protein is Delta-hemolysin (hld).